Here is a 501-residue protein sequence, read N- to C-terminus: Lysine--tRNA ligase (501 aa).

Mg(2+) is bound by residues glutamate 410 and glutamate 417.

It belongs to the class-II aminoacyl-tRNA synthetase family. Homodimer. Mg(2+) is required as a cofactor.

The protein localises to the cytoplasm. It catalyses the reaction tRNA(Lys) + L-lysine + ATP = L-lysyl-tRNA(Lys) + AMP + diphosphate. This Shewanella halifaxensis (strain HAW-EB4) protein is Lysine--tRNA ligase.